The chain runs to 360 residues: UDP-N-acetylglucosamine--N-acetylmuramyl-(pentapeptide) pyrophosphoryl-undecaprenol N-acetylglucosamine transferase (360 aa).

UDP-N-acetyl-alpha-D-glucosamine is bound by residues Ser198 and Gln289.

The protein belongs to the glycosyltransferase 28 family. MurG subfamily.

It localises to the cell membrane. The catalysed reaction is Mur2Ac(oyl-L-Ala-gamma-D-Glu-L-Lys-D-Ala-D-Ala)-di-trans,octa-cis-undecaprenyl diphosphate + UDP-N-acetyl-alpha-D-glucosamine = beta-D-GlcNAc-(1-&gt;4)-Mur2Ac(oyl-L-Ala-gamma-D-Glu-L-Lys-D-Ala-D-Ala)-di-trans,octa-cis-undecaprenyl diphosphate + UDP + H(+). Its pathway is cell wall biogenesis; peptidoglycan biosynthesis. Functionally, cell wall formation. Catalyzes the transfer of a GlcNAc subunit on undecaprenyl-pyrophosphoryl-MurNAc-pentapeptide (lipid intermediate I) to form undecaprenyl-pyrophosphoryl-MurNAc-(pentapeptide)GlcNAc (lipid intermediate II). The sequence is that of UDP-N-acetylglucosamine--N-acetylmuramyl-(pentapeptide) pyrophosphoryl-undecaprenol N-acetylglucosamine transferase from Streptococcus pyogenes serotype M5 (strain Manfredo).